The chain runs to 425 residues: Glutamyl-tRNA(Gln) amidotransferase subunit A (425 aa).

Residues Lys-29 and Ser-104 each act as charge relay system in the active site. Ser-128 serves as the catalytic Acyl-ester intermediate.

Belongs to the amidase family. GatA subfamily. As to quaternary structure, heterotrimer of A, B and C subunits.

It carries out the reaction L-glutamyl-tRNA(Gln) + L-glutamine + ATP + H2O = L-glutaminyl-tRNA(Gln) + L-glutamate + ADP + phosphate + H(+). Functionally, allows the formation of correctly charged Gln-tRNA(Gln) through the transamidation of misacylated Glu-tRNA(Gln) in organisms which lack glutaminyl-tRNA synthetase. The reaction takes place in the presence of glutamine and ATP through an activated gamma-phospho-Glu-tRNA(Gln). The polypeptide is Glutamyl-tRNA(Gln) amidotransferase subunit A (Haloarcula marismortui (strain ATCC 43049 / DSM 3752 / JCM 8966 / VKM B-1809) (Halobacterium marismortui)).